A 104-amino-acid polypeptide reads, in one-letter code: ATP-dependent Clp protease adapter protein ClpS (104 aa).

The interval 1 to 20 (MSPDPHEDLGDVLTEPTQKT) is disordered.

It belongs to the ClpS family. In terms of assembly, binds to the N-terminal domain of the chaperone ClpA.

In terms of biological role, involved in the modulation of the specificity of the ClpAP-mediated ATP-dependent protein degradation. The chain is ATP-dependent Clp protease adapter protein ClpS from Desulfatibacillum aliphaticivorans.